A 273-amino-acid chain; its full sequence is 3-methyl-2-oxobutanoate hydroxymethyltransferase (273 aa).

Mg(2+) contacts are provided by D53 and D92. Residues 53–54 (DS), D92, and K122 each bind 3-methyl-2-oxobutanoate. Residue E124 participates in Mg(2+) binding. The active-site Proton acceptor is E191.

It belongs to the PanB family. In terms of assembly, homodecamer; pentamer of dimers. Mg(2+) is required as a cofactor.

The protein resides in the cytoplasm. The catalysed reaction is 3-methyl-2-oxobutanoate + (6R)-5,10-methylene-5,6,7,8-tetrahydrofolate + H2O = 2-dehydropantoate + (6S)-5,6,7,8-tetrahydrofolate. Its pathway is cofactor biosynthesis; (R)-pantothenate biosynthesis; (R)-pantoate from 3-methyl-2-oxobutanoate: step 1/2. Its function is as follows. Catalyzes the reversible reaction in which hydroxymethyl group from 5,10-methylenetetrahydrofolate is transferred onto alpha-ketoisovalerate to form ketopantoate. This is 3-methyl-2-oxobutanoate hydroxymethyltransferase from Porphyromonas gingivalis (strain ATCC 33277 / DSM 20709 / CIP 103683 / JCM 12257 / NCTC 11834 / 2561).